The sequence spans 337 residues: Undecaprenyl-phosphate 4-deoxy-4-formamido-L-arabinose transferase (337 aa).

2 consecutive transmembrane segments (helical) span residues 235 to 255 (LSII…LLII) and 270 to 290 (FVLF…MGLL).

Belongs to the glycosyltransferase 2 family.

The protein resides in the cell inner membrane. The enzyme catalyses UDP-4-deoxy-4-formamido-beta-L-arabinose + di-trans,octa-cis-undecaprenyl phosphate = 4-deoxy-4-formamido-alpha-L-arabinopyranosyl di-trans,octa-cis-undecaprenyl phosphate + UDP. It functions in the pathway glycolipid biosynthesis; 4-amino-4-deoxy-alpha-L-arabinose undecaprenyl phosphate biosynthesis; 4-amino-4-deoxy-alpha-L-arabinose undecaprenyl phosphate from UDP-4-deoxy-4-formamido-beta-L-arabinose and undecaprenyl phosphate: step 1/2. The protein operates within bacterial outer membrane biogenesis; lipopolysaccharide biosynthesis. In terms of biological role, catalyzes the transfer of 4-deoxy-4-formamido-L-arabinose from UDP to undecaprenyl phosphate. The modified arabinose is attached to lipid A and is required for resistance to polymyxin and cationic antimicrobial peptides. This Pseudomonas savastanoi pv. phaseolicola (strain 1448A / Race 6) (Pseudomonas syringae pv. phaseolicola (strain 1448A / Race 6)) protein is Undecaprenyl-phosphate 4-deoxy-4-formamido-L-arabinose transferase.